The following is a 450-amino-acid chain: ADP-specific phosphofructokinase (450 aa).

In terms of domain architecture, ADPK spans 1 to 449 (MIPEHLSIYT…FLTYLEFLKR (449 aa)). 3 residues coordinate Mg(2+): E260, E290, and D433. D433 (proton acceptor) is an active-site residue.

It belongs to the carbohydrate kinase PfkC family. The cofactor is Mg(2+).

It localises to the cytoplasm. It catalyses the reaction beta-D-fructose 6-phosphate + ADP = beta-D-fructose 1,6-bisphosphate + AMP + H(+). It functions in the pathway carbohydrate degradation; glycolysis. Catalyzes the phosphorylation of fructose 6-phosphate to fructose 1,6-bisphosphate using ADP as the phosphate donor. This Pyrococcus horikoshii (strain ATCC 700860 / DSM 12428 / JCM 9974 / NBRC 100139 / OT-3) protein is ADP-specific phosphofructokinase.